The chain runs to 445 residues: FAS-associated factor 2 (445 aa).

Ala-2 bears the N-acetylalanine mark. One can recognise a UBA domain in the interval 12 to 48 (EQTEKLLQFQDLTGIESMDQCRHTLEQHNWNIEAAVQ). N6-acetyllysine is present on Lys-167. Positions 275 to 350 (SERLEREERN…EEKERKLECL (76 aa)) form a coiled coil. Residues 299-361 (ASLRADQEKE…PEPSPDDPES (63 aa)) form a disordered region. Residues 303–348 (ADQEKERKKREERERKRRKEEEVQQQKLAEERRRQNLQEEKERKLE) show a composition bias toward basic and acidic residues. The 83-residue stretch at 357-439 (DDPESVKIIF…GLSHTEVLFV (83 aa)) folds into the UBX domain.

As to quaternary structure, identified in a complex that contains SEL1L, OS9, FAF2/UBXD8, UBE2J1/UBC6E and AUP1. Interacts with YOD1. Interacts (via N-terminus) with UBQLN2 (via C-terminus). Interacts with PNPLA2 and UBAC2. Interacts with ZFAND2B; probably through VCP. Interacts with LMBR1L. As to expression, broadly expressed, with highest levels in brain.

The protein localises to the cytoplasm. It localises to the lipid droplet. Its subcellular location is the endoplasmic reticulum. Functionally, plays an important role in endoplasmic reticulum-associated degradation (ERAD) that mediates ubiquitin-dependent degradation of misfolded endoplasmic reticulum proteins. By controlling the steady-state expression of the IGF1R receptor, indirectly regulates the insulin-like growth factor receptor signaling pathway. Involved in inhibition of lipid droplet degradation by binding to phospholipase PNPL2 and inhibiting its activity by promoting dissociation of PNPL2 from its endogenous activator, ABHD5 which inhibits the rate of triacylglycerol hydrolysis. Involved in stress granule disassembly: associates with ubiquitinated G3BP1 in response to heat shock, thereby promoting interaction between ubiquitinated G3BP1 and VCP, followed by G3BP1 extraction from stress granules and stress granule disassembly. The chain is FAS-associated factor 2 from Homo sapiens (Human).